Consider the following 62-residue polypeptide: Photosystem II reaction center protein Z (62 aa).

A run of 2 helical transmembrane segments spans residues 8–28 (AVFALIVTSSILLISVPVVFA) and 41–61 (FSGTSLWIGLVFLVGILNSLI).

The protein belongs to the PsbZ family. PSII is composed of 1 copy each of membrane proteins PsbA, PsbB, PsbC, PsbD, PsbE, PsbF, PsbH, PsbI, PsbJ, PsbK, PsbL, PsbM, PsbT, PsbY, PsbZ, Psb30/Ycf12, at least 3 peripheral proteins of the oxygen-evolving complex and a large number of cofactors. It forms dimeric complexes.

Its subcellular location is the plastid. The protein localises to the chloroplast thylakoid membrane. Functionally, may control the interaction of photosystem II (PSII) cores with the light-harvesting antenna, regulates electron flow through the 2 photosystem reaction centers. PSII is a light-driven water plastoquinone oxidoreductase, using light energy to abstract electrons from H(2)O, generating a proton gradient subsequently used for ATP formation. The polypeptide is Photosystem II reaction center protein Z (Cucumis sativus (Cucumber)).